The chain runs to 454 residues: Ribosomal protein uS12 methylthiotransferase RimO (454 aa).

The 111-residue stretch at 19–129 (AKVGFVSLGC…VLAQVHEHVA (111 aa)) folds into the MTTase N-terminal domain. [4Fe-4S] cluster contacts are provided by C28, C64, C93, C161, C165, and C168. In terms of domain architecture, Radical SAM core spans 147–384 (LTPKHYAYLK…MAVQAKISSD (238 aa)). Residues 387-453 (QVRIGQEYLI…EHDVWGVRVE (67 aa)) enclose the TRAM domain.

Belongs to the methylthiotransferase family. RimO subfamily. [4Fe-4S] cluster serves as cofactor.

Its subcellular location is the cytoplasm. It carries out the reaction L-aspartate(89)-[ribosomal protein uS12]-hydrogen + (sulfur carrier)-SH + AH2 + 2 S-adenosyl-L-methionine = 3-methylsulfanyl-L-aspartate(89)-[ribosomal protein uS12]-hydrogen + (sulfur carrier)-H + 5'-deoxyadenosine + L-methionine + A + S-adenosyl-L-homocysteine + 2 H(+). Catalyzes the methylthiolation of an aspartic acid residue of ribosomal protein uS12. This is Ribosomal protein uS12 methylthiotransferase RimO from Colwellia psychrerythraea (strain 34H / ATCC BAA-681) (Vibrio psychroerythus).